Reading from the N-terminus, the 598-residue chain is Probable translation initiation factor IF-2 (598 aa).

Residues 3 to 225 (LRCPIVSVLG…GLAQKFLEQK (223 aa)) enclose the tr-type G domain. Residues 12–19 (GHVDHGKT) form a G1 region. 12–19 (GHVDHGKT) lines the GTP pocket. The tract at residues 37–41 (GITQH) is G2. Residues 76–79 (DTPG) are G3. Residues 76–80 (DTPGH) and 130–133 (NKLD) each bind GTP. The interval 130 to 133 (NKLD) is G4. The G5 stretch occupies residues 200 to 202 (SAM).

It belongs to the TRAFAC class translation factor GTPase superfamily. Classic translation factor GTPase family. IF-2 subfamily.

In terms of biological role, function in general translation initiation by promoting the binding of the formylmethionine-tRNA to ribosomes. Seems to function along with eIF-2. This chain is Probable translation initiation factor IF-2, found in Methanococcus maripaludis (strain C6 / ATCC BAA-1332).